A 231-amino-acid polypeptide reads, in one-letter code: Probable methylthioribulose-1-phosphate dehydratase (231 aa).

Cys-82 lines the substrate pocket. Positions 100 and 102 each coordinate Zn(2+). The active-site Proton donor/acceptor is Glu-123. His-181 is a Zn(2+) binding site.

This sequence belongs to the aldolase class II family. MtnB subfamily. Zn(2+) serves as cofactor.

The protein resides in the cytoplasm. It catalyses the reaction 5-(methylsulfanyl)-D-ribulose 1-phosphate = 5-methylsulfanyl-2,3-dioxopentyl phosphate + H2O. The protein operates within amino-acid biosynthesis; L-methionine biosynthesis via salvage pathway; L-methionine from S-methyl-5-thio-alpha-D-ribose 1-phosphate: step 2/6. In terms of biological role, catalyzes the dehydration of methylthioribulose-1-phosphate (MTRu-1-P) into 2,3-diketo-5-methylthiopentyl-1-phosphate (DK-MTP-1-P). The protein is Probable methylthioribulose-1-phosphate dehydratase of Dictyostelium discoideum (Social amoeba).